Here is a 549-residue protein sequence, read N- to C-terminus: Probable protein kinase UbiB (549 aa).

The Protein kinase domain maps to aspartate 123–leucine 504. Residues leucine 129 to valine 137 and lysine 156 contribute to the ATP site. Aspartate 291 acts as the Proton acceptor in catalysis. A helical membrane pass occupies residues methionine 505–valine 525.

It belongs to the ABC1 family. UbiB subfamily.

Its subcellular location is the cell inner membrane. It functions in the pathway cofactor biosynthesis; ubiquinone biosynthesis [regulation]. Its function is as follows. Is probably a protein kinase regulator of UbiI activity which is involved in aerobic coenzyme Q (ubiquinone) biosynthesis. In Glaesserella parasuis serovar 5 (strain SH0165) (Haemophilus parasuis), this protein is Probable protein kinase UbiB.